A 198-amino-acid chain; its full sequence is Glutamyl-tRNA(Gln) amidotransferase subunit C, mitochondrial (198 aa).

Belongs to the GatC family. As to quaternary structure, subunit of the heterotrimeric GatCAB amidotransferase (AdT) complex, composed of A, B and C subunits.

It is found in the mitochondrion. It carries out the reaction L-glutamyl-tRNA(Gln) + L-glutamine + ATP + H2O = L-glutaminyl-tRNA(Gln) + L-glutamate + ADP + phosphate + H(+). Allows the formation of correctly charged Gln-tRNA(Gln) through the transamidation of misacylated Glu-tRNA(Gln) in the mitochondria. The reaction takes place in the presence of glutamine and ATP through an activated gamma-phospho-Glu-tRNA(Gln). The chain is Glutamyl-tRNA(Gln) amidotransferase subunit C, mitochondrial from Caenorhabditis remanei (Caenorhabditis vulgaris).